Here is a 499-residue protein sequence, read N- to C-terminus: Heparin cofactor 2 (499 aa).

A signal peptide spans 1-19 (MKHSLNALLIFLIITSAWG). S37 is subject to Phosphoserine; by FAM20C. Residue N49 is glycosylated (N-linked (GlcNAc...) (complex) asparagine). The segment at 68-79 (DWIPEGEEDDDY) is chemotactic activity. A run of 2 repeats spans residues 73 to 83 (GEEDDDYLDLE) and 87 to 97 (SEDDDYIDIVD). The 2 X 11 AA approximate repeats, Asp/Glu-rich (acidic) (hirudin-like) stretch occupies residues 73–97 (GEEDDDYLDLEKIFSEDDDYIDIVD). Sulfotyrosine occurs at positions 79 and 92. N-linked (GlcNAc...) asparagine glycosylation is present at N188. A glycosaminoglycan-binding site region spans residues 192–212 (KYEITTIHNLFRKLTHRLFRR). N387 carries N-linked (GlcNAc...) asparagine glycosylation.

The protein belongs to the serpin family. Post-translationally, phosphorylated by FAM20C in the extracellular medium. Expressed predominantly in liver. Also present in plasma. In terms of tissue distribution, expressed in plasma (at protein level). Expressed in liver.

Its function is as follows. Thrombin inhibitor activated by the glycosaminoglycans, heparin or dermatan sulfate. In the presence of the latter, HC-II becomes the predominant thrombin inhibitor in place of antithrombin III (AT-III). Also inhibits chymotrypsin, but in a glycosaminoglycan-independent manner. Peptides at the N-terminal of HC-II have chemotactic activity for both monocytes and neutrophils. In terms of biological role, shows negligible inhibition, in vitro, of thrombin and tPA and no inhibition of factor Xa, in vitro. The sequence is that of Heparin cofactor 2 (SERPIND1) from Homo sapiens (Human).